A 750-amino-acid chain; its full sequence is Photosystem I P700 chlorophyll a apoprotein A1 (750 aa).

8 consecutive transmembrane segments (helical) span residues Val-70–Ala-93, Leu-156–His-179, Leu-195–Leu-219, Ile-291–Tyr-309, Trp-346–Tyr-369, Leu-385–Val-411, Ala-433–His-455, and Phe-531–Leu-549. The [4Fe-4S] cluster site is built by Cys-573 and Cys-582. Transmembrane regions (helical) follow at residues His-589 to Trp-610 and Leu-664 to Phe-686. His-675 contacts chlorophyll a'. Positions 683 and 691 each coordinate chlorophyll a. Trp-692 serves as a coordination point for phylloquinone. Residues Ala-724–Ala-744 traverse the membrane as a helical segment.

The protein belongs to the PsaA/PsaB family. In terms of assembly, the PsaA/B heterodimer binds the P700 chlorophyll special pair and subsequent electron acceptors. PSI consists of a core antenna complex that captures photons, and an electron transfer chain that converts photonic excitation into a charge separation. The eukaryotic PSI reaction center is composed of at least 11 subunits. Requires P700 is a chlorophyll a/chlorophyll a' dimer, A0 is one or more chlorophyll a, A1 is one or both phylloquinones and FX is a shared 4Fe-4S iron-sulfur center. as cofactor.

It is found in the plastid. The protein localises to the chloroplast thylakoid membrane. It catalyses the reaction reduced [plastocyanin] + hnu + oxidized [2Fe-2S]-[ferredoxin] = oxidized [plastocyanin] + reduced [2Fe-2S]-[ferredoxin]. In terms of biological role, psaA and PsaB bind P700, the primary electron donor of photosystem I (PSI), as well as the electron acceptors A0, A1 and FX. PSI is a plastocyanin-ferredoxin oxidoreductase, converting photonic excitation into a charge separation, which transfers an electron from the donor P700 chlorophyll pair to the spectroscopically characterized acceptors A0, A1, FX, FA and FB in turn. Oxidized P700 is reduced on the lumenal side of the thylakoid membrane by plastocyanin. This is Photosystem I P700 chlorophyll a apoprotein A1 from Drimys granadensis.